The chain runs to 130 residues: Small ribosomal subunit protein uS9 (130 aa).

Residues leucine 98–arginine 130 are disordered. A compositionally biased stretch (basic residues) spans lysine 111 to arginine 130.

This sequence belongs to the universal ribosomal protein uS9 family.

The sequence is that of Small ribosomal subunit protein uS9 from Sorangium cellulosum (strain So ce56) (Polyangium cellulosum (strain So ce56)).